The primary structure comprises 555 residues: GPI-anchor transamidase component PIGS (555 aa).

Topologically, residues 2-18 are cytoplasmic; it reads AAAGAAATDLEVVRGKR. The a cardiolipin site is built by Arg15 and Arg18. Residues 19 to 39 traverse the membrane as a helical segment; it reads SALFFAAVAILLGLPLWWKTT. Residues 40-517 lie on the Lumenal side of the membrane; sequence ETYRAPLPYS…LHLLYFPDDQ (478 aa). Residues Asn267 and Asn370 are each glycosylated (N-linked (GlcNAc...) asparagine). The helical transmembrane segment at 518 to 532 threads the bilayer; that stretch reads KFAIYIPLFLPMAVP. The Cytoplasmic portion of the chain corresponds to 533-555; the sequence is ILLSLVKIFQETRKSWKKPEKID.

The protein belongs to the PIGS family. In terms of assembly, heteropentamer. Part of the GPI-anchor transamidase complex, consisting of PIGK, PIGT, PIGS, PIGU and GAA1.

The protein localises to the endoplasmic reticulum membrane. Its pathway is glycolipid biosynthesis; glycosylphosphatidylinositol-anchor biosynthesis. Functionally, component of the glycosylphosphatidylinositol-anchor (GPI-anchor) transamidase (GPI-T) complex that catalyzes the formation of the linkage between a proprotein and a GPI-anchor and participates in GPI anchored protein biosynthesis. This Mus musculus (Mouse) protein is GPI-anchor transamidase component PIGS.